Here is a 1488-residue protein sequence, read N- to C-terminus: Chromosome partition protein MukB (1488 aa).

Residue 34–41 (GGNGAGKS) participates in ATP binding. Coiled coils occupy residues 326 to 418 (LEAD…QYNQ), 444 to 472 (LDTFQAKEQEATEKLLSLEQKMSVAQTAH), and 509 to 602 (RHLA…QRAP). A flexible hinge region spans residues 666 to 783 (PGGAEDQRLN…SLPIFGRAAR (118 aa)). Coiled coils occupy residues 835–923 (EAEI…AKLE), 977–1116 (EMLS…AKAG), and 1209–1265 (VEAI…LQSV). The disordered stretch occupies residues 1049-1074 (ADSGAEERARQRRDELHAQLSNNRSR). Positions 1051–1065 (SGAEERARQRRDELH) are enriched in basic and acidic residues.

It belongs to the SMC family. MukB subfamily. As to quaternary structure, homodimerization via its hinge domain. Binds to DNA via its C-terminal region. Interacts, and probably forms a ternary complex, with MukE and MukF via its C-terminal region. The complex formation is stimulated by calcium or magnesium. Interacts with tubulin-related protein FtsZ.

It is found in the cytoplasm. Its subcellular location is the nucleoid. Its function is as follows. Plays a central role in chromosome condensation, segregation and cell cycle progression. Functions as a homodimer, which is essential for chromosome partition. Involved in negative DNA supercoiling in vivo, and by this means organize and compact chromosomes. May achieve or facilitate chromosome segregation by condensation DNA from both sides of a centrally located replisome during cell division. The protein is Chromosome partition protein MukB of Salmonella gallinarum (strain 287/91 / NCTC 13346).